A 1373-amino-acid chain; its full sequence is DNA-directed RNA polymerase subunit beta'' (1373 aa).

The Zn(2+) site is built by cysteine 224, cysteine 296, cysteine 303, and cysteine 306.

Belongs to the RNA polymerase beta' chain family. RpoC2 subfamily. As to quaternary structure, in plastids the minimal PEP RNA polymerase catalytic core is composed of four subunits: alpha, beta, beta', and beta''. When a (nuclear-encoded) sigma factor is associated with the core the holoenzyme is formed, which can initiate transcription. Zn(2+) is required as a cofactor.

The protein localises to the plastid. It localises to the chloroplast. It carries out the reaction RNA(n) + a ribonucleoside 5'-triphosphate = RNA(n+1) + diphosphate. Its function is as follows. DNA-dependent RNA polymerase catalyzes the transcription of DNA into RNA using the four ribonucleoside triphosphates as substrates. In Amborella trichopoda, this protein is DNA-directed RNA polymerase subunit beta''.